A 379-amino-acid polypeptide reads, in one-letter code: Deoxyhypusine synthase (379 aa).

NAD(+) contacts are provided by residues 104–108 (SNLVS), 130–132 (TAG), glutamate 136, and aspartate 237. 135–136 (EE) provides a ligand contact to spermidine. Aspartate 242 is a spermidine binding site. Glycine 293 provides a ligand contact to NAD(+). Residue histidine 298 participates in spermidine binding. An NAD(+)-binding site is contributed by 318 to 319 (TA). Residues 324 to 326 (GSD) and 333 to 339 (EAVSWGK) each bind spermidine. Lysine 339 serves as the catalytic Nucleophile. 352–353 (DA) is a binding site for NAD(+).

It belongs to the deoxyhypusine synthase family. As to quaternary structure, homotetramer. NAD(+) serves as cofactor.

The catalysed reaction is [eIF5A protein]-L-lysine + spermidine = [eIF5A protein]-deoxyhypusine + propane-1,3-diamine. It participates in protein modification; eIF5A hypusination. Functionally, catalyzes the NAD-dependent oxidative cleavage of spermidine and the subsequent transfer of the butylamine moiety of spermidine to the epsilon-amino group of a specific lysine residue of the eIF-5A precursor protein to form the intermediate deoxyhypusine residue. Also able to produce homospermidine from putrescine. The polypeptide is Deoxyhypusine synthase (DHS1) (Nicotiana tabacum (Common tobacco)).